The following is a 108-amino-acid chain: Nucleoid-associated protein ACP_0492 (108 aa).

This sequence belongs to the YbaB/EbfC family. Homodimer.

Its subcellular location is the cytoplasm. The protein localises to the nucleoid. In terms of biological role, binds to DNA and alters its conformation. May be involved in regulation of gene expression, nucleoid organization and DNA protection. This is Nucleoid-associated protein ACP_0492 from Acidobacterium capsulatum (strain ATCC 51196 / DSM 11244 / BCRC 80197 / JCM 7670 / NBRC 15755 / NCIMB 13165 / 161).